The following is a 335-amino-acid chain: Beta-hexosaminidase (335 aa).

Substrate is bound by residues aspartate 60, arginine 68, arginine 133, and 163–164 (KH). The active-site Proton donor/acceptor is histidine 176. Residue aspartate 247 is the Nucleophile of the active site.

The protein belongs to the glycosyl hydrolase 3 family. NagZ subfamily.

Its subcellular location is the cytoplasm. It carries out the reaction Hydrolysis of terminal non-reducing N-acetyl-D-hexosamine residues in N-acetyl-beta-D-hexosaminides.. It functions in the pathway cell wall biogenesis; peptidoglycan recycling. Its function is as follows. Plays a role in peptidoglycan recycling by cleaving the terminal beta-1,4-linked N-acetylglucosamine (GlcNAc) from peptide-linked peptidoglycan fragments, giving rise to free GlcNAc, anhydro-N-acetylmuramic acid and anhydro-N-acetylmuramic acid-linked peptides. The polypeptide is Beta-hexosaminidase (Stenotrophomonas maltophilia (strain K279a)).